The sequence spans 456 residues: MSALHLYNSLSRQKEPFHPITPNHVMMYVCGMTVYDFCHIGHARVMVVFDTIARHLRASGYQLTYVRNITDIDDKIIRRAAENNEPIQALTQRFINAMHEDEAALGCLPPSIEPKATEYVAEMIAMIGELIAQNHAYIADNGDVYYSVRSFDEYGKLANRRLEDLRAGERIAINEAKNDPLDFVLWKKAKTGEPSWESPWGAGRPGWHIECSVMSRHQLGDHFDIHGGGMDLKFPHHECEIAQSEPVCGGKHVNYWLHNGFINIDNEKMSKSLGNFFTVRDVLKNYAGEVIRFFMLQSHYRGPVNYSDAALEEAKRGLQRLYTALETAPTTGGAILLPYQERFVAAMDDDFNTPQAIAVLFELAKMLNKAAAAEAADIAFTLRTLAARLGLLTGDAKTLFQQKGALSAAEIEAEIARRQAAKAAKDYATADSIREKLSALGIELKDSATGTQWYYR.

Position 30 (cysteine 30) interacts with Zn(2+). The 'HIGH' region signature appears at 32 to 42 (MTVYDFCHIGH). Positions 211, 236, and 240 each coordinate Zn(2+). A 'KMSKS' region motif is present at residues 268–272 (KMSKS). Lysine 271 lines the ATP pocket.

The protein belongs to the class-I aminoacyl-tRNA synthetase family. Monomer. Requires Zn(2+) as cofactor.

The protein localises to the cytoplasm. The enzyme catalyses tRNA(Cys) + L-cysteine + ATP = L-cysteinyl-tRNA(Cys) + AMP + diphosphate. In Dichelobacter nodosus (strain VCS1703A), this protein is Cysteine--tRNA ligase.